A 296-amino-acid polypeptide reads, in one-letter code: Probable porphobilinogen deaminase (296 aa).

The residue at position 241 (Cys-241) is an S-(dipyrrolylmethanemethyl)cysteine.

This sequence belongs to the HMBS family. Dipyrromethane is required as a cofactor.

It catalyses the reaction 4 porphobilinogen + H2O = hydroxymethylbilane + 4 NH4(+). It functions in the pathway porphyrin-containing compound metabolism; protoporphyrin-IX biosynthesis; coproporphyrinogen-III from 5-aminolevulinate: step 2/4. Tetrapolymerization of the monopyrrole PBG into the hydroxymethylbilane pre-uroporphyrinogen in several discrete steps. This chain is Probable porphobilinogen deaminase, found in Pyrobaculum neutrophilum (strain DSM 2338 / JCM 9278 / NBRC 100436 / V24Sta) (Thermoproteus neutrophilus).